Here is a 256-residue protein sequence, read N- to C-terminus: Enkurin (256 aa).

The interval T48 to T92 is disordered. Positions D61–L72 are enriched in basic and acidic residues. The SH3-binding signature appears at P83–P89. The region spanning K160–I252 is the Enkurin domain. The 12-residue stretch at I176–R187 folds into the IQ domain.

In terms of assembly, microtubule inner protein component of sperm flagellar doublet microtubules. Binds calmodulin via its IQ domain. Interacts with TRPC1, TRPC2, TRPC5, but not TRPC3. Interacts with CFAP45.

The protein resides in the cytoplasm. The protein localises to the cytoskeleton. It is found in the cilium axoneme. Its subcellular location is the flagellum axoneme. Its function is as follows. Adapter that functions to localize a calcium-sensitive signal transduction machinery in sperm to a calcium-permeable ion channel. Microtubule inner protein (MIP) part of the dynein-decorated doublet microtubules (DMTs) in cilia axoneme, which is required for motile cilia beating. This is Enkurin (ENKUR) from Sus scrofa (Pig).